The chain runs to 560 residues: Formate--tetrahydrofolate ligase (560 aa).

An ATP-binding site is contributed by 69–76; that stretch reads TPAGEGKS.

This sequence belongs to the formate--tetrahydrofolate ligase family.

It catalyses the reaction (6S)-5,6,7,8-tetrahydrofolate + formate + ATP = (6R)-10-formyltetrahydrofolate + ADP + phosphate. It functions in the pathway one-carbon metabolism; tetrahydrofolate interconversion. The protein is Formate--tetrahydrofolate ligase of Listeria monocytogenes serotype 4b (strain CLIP80459).